The sequence spans 235 residues: Phosphoribosylaminoimidazole-succinocarboxamide synthase (235 aa).

Belongs to the SAICAR synthetase family.

The catalysed reaction is 5-amino-1-(5-phospho-D-ribosyl)imidazole-4-carboxylate + L-aspartate + ATP = (2S)-2-[5-amino-1-(5-phospho-beta-D-ribosyl)imidazole-4-carboxamido]succinate + ADP + phosphate + 2 H(+). Its pathway is purine metabolism; IMP biosynthesis via de novo pathway; 5-amino-1-(5-phospho-D-ribosyl)imidazole-4-carboxamide from 5-amino-1-(5-phospho-D-ribosyl)imidazole-4-carboxylate: step 1/2. In Clostridium botulinum (strain Alaska E43 / Type E3), this protein is Phosphoribosylaminoimidazole-succinocarboxamide synthase.